We begin with the raw amino-acid sequence, 415 residues long: Low affinity tryptophan permease (415 aa).

Residues 1–11 (MTDQAEKKHSA) are Cytoplasmic-facing. Residues 12–32 (FWGVMVIAGTVIGGGMFALPV) form a helical membrane-spanning segment. Residue D33 is a topological domain, periplasmic. A helical membrane pass occupies residues 34 to 54 (LAGAWFFWGAFILIIAWFSML). Residues 55 to 86 (HSGLLLLEANLNYPVGSSFNTITKDLIGNTWN) are Cytoplasmic-facing. A helical membrane pass occupies residues 87–107 (IISGITVAFVLYILTYAYISA). Topologically, residues 108–127 (NGAIISETISMNLGYHANPR) are periplasmic. A helical transmembrane segment spans residues 128-148 (IVGICTAIFVASVLWLSSLAA). The Cytoplasmic segment spans residues 149–153 (SRITS). The helical transmembrane segment at 154–174 (LFLGLKIISFVIVFGSFFFQV) threads the bilayer. The Periplasmic segment spans residues 175–191 (DYSILRDATSSTAGTSY). A helical transmembrane segment spans residues 192–212 (FPYIFMALPVCLASFGFHGNI). Topologically, residues 213 to 229 (PSLIICYGKRKDKLIKS) are cytoplasmic. The helical transmembrane segment at 230–250 (VVFGSLLALVIYLFWLYCTMG) threads the bilayer. Over 251–286 (NIPRESFKAIISSGGNVDSLVKSFLGTKQHGIIEFC) the chain is Periplasmic. A helical membrane pass occupies residues 287–307 (LLVFSNLAVASSFFGVTLGLF). Topologically, residues 308-326 (DYLADLFKIDNSHGGRFKT) are cytoplasmic. A helical membrane pass occupies residues 327–347 (VLLTFLPPALLYLIFPNGFIY). Position 348 (G348) is a topological domain, periplasmic. The helical transmembrane segment at 349–369 (IGGAGLCATIWAVIIPAVLAI) threads the bilayer. The Cytoplasmic segment spans residues 370 to 387 (KARKKFPNQMFTVWGGNL). The chain crosses the membrane as a helical span at residues 388-408 (IPAIVILFGITVILCWFGNVF). Residues 409-415 (NVLPKFG) lie on the Periplasmic side of the membrane.

This sequence belongs to the amino acid/polyamine transporter 2 family. Mtr/TnaB/TyrP permease subfamily.

The protein resides in the cell inner membrane. Functionally, involved in tryptophan transport across the cytoplasmic membrane. Plays a role in transporting tryptophan which is to be used catabolically. This is Low affinity tryptophan permease (tnaB) from Escherichia coli (strain K12).